The chain runs to 614 residues: DNA double-strand break repair protein Mre11 (614 aa).

Mn(2+) is bound by residues Asp12, His14, Asp53, and Asn88. Residue His89 is the Proton donor of the active site. Positions 158, 189, and 191 each coordinate Mn(2+). Disordered stretches follow at residues 393 to 434 and 487 to 614; these read ASPI…SPDI and ALKK…GDYL. Low complexity predominate over residues 411–425; the sequence is PVSSADSVSAVSPES. Basic and acidic residues-rich tracts occupy residues 487 to 502, 535 to 558, and 568 to 591; these read ALKK…REAP, VPEK…KETG, and GSEK…EKPV.

It belongs to the MRE11/RAD32 family. As to quaternary structure, homodimer. Forms a heterotetramer composed of two Mre11 subunits and two Rad50 subunits. The cofactor is Mn(2+).

Nuclease activity is regulated by Rad50. In terms of biological role, part of the Rad50/Mre11 complex, which is involved in the early steps of DNA double-strand break (DSB) repair. The complex may facilitate opening of the processed DNA ends to aid in the recruitment of HerA and NurA. Mre11 binds to DSB ends and has both double-stranded 3'-5' exonuclease activity and single-stranded endonuclease activity. This Methanosarcina acetivorans (strain ATCC 35395 / DSM 2834 / JCM 12185 / C2A) protein is DNA double-strand break repair protein Mre11.